The chain runs to 491 residues: MGERDDEAEGILEKAKIPLLKDQNVAEEENGEIKKEIWLETKKLWRIVGPAIFTRVTTNLIFVITQAFAGHLGELELAAISIVNNVIIGFNYSLFIGMATALETLCGQAFGAKKYDMFGVYLQRSWIVLFLFSILLLPMYIFATPILKFMGQPDDIAELSGIISVWAIPTHFSFAFFFPINRFLQCQLKNSVIAISSGVSLVVHIFVCWLFVYVLELGVIGTIATANVSWWLNVFILFTYTTCGGCPLTWTGFSMESFTRLWEFTKLSASSGIMVCLENWYYRMLIVMTGNLEDARIDVDSMSICMSINGLEMMVPLAFFAGTSVRVANELGAGNGKRARFAMIISVTQSLIIGIIISVLIYFLLDQIGWMFSSSETVLKAVNNLSILLSFAILLNSVQPVLSGVAVGSGWQSLVAFINLGCYYFIGLPLGIVMGWMFKFGVKGIWAGMIFGGTMVQTLILIFITMRCDWEKEAQNAKVRVNKWSVSDARK.

Transmembrane regions (helical) follow at residues 47 to 67, 77 to 97, 127 to 147, 160 to 180, 192 to 212, 228 to 248, 272 to 292, 302 to 322, 352 to 372, 387 to 407, 414 to 434, and 444 to 464; these read IVGP…ITQA, LAAI…LFIG, IVLF…TPIL, SGII…FFPI, VIAI…WLFV, VSWW…GCPL, GIMV…TGNL, MSIC…FFAG, IIGI…GWMF, ILLS…GVAV, LVAF…GIVM, and GIWA…LIFI.

This sequence belongs to the multi antimicrobial extrusion (MATE) (TC 2.A.66.1) family.

It localises to the membrane. The sequence is that of Protein DETOXIFICATION 28 from Arabidopsis thaliana (Mouse-ear cress).